Reading from the N-terminus, the 451-residue chain is tRNA-2-methylthio-N(6)-dimethylallyladenosine synthase (451 aa).

Positions 10–128 constitute an MTTase N-terminal domain; it reads KKFYTLTFGC…FPQLLEHVMQ (119 aa). Residues cysteine 19, cysteine 55, cysteine 89, cysteine 165, cysteine 169, and cysteine 172 each contribute to the [4Fe-4S] cluster site. One can recognise a Radical SAM core domain in the interval 151–381; that stretch reads REDSIKAWVV…ISVQQEISEQ (231 aa). The TRAM domain maps to 384–447; the sequence is KDLENTVQRI…SWNLYGEIFE (64 aa).

It belongs to the methylthiotransferase family. MiaB subfamily. As to quaternary structure, monomer. [4Fe-4S] cluster serves as cofactor.

It is found in the cytoplasm. The enzyme catalyses N(6)-dimethylallyladenosine(37) in tRNA + (sulfur carrier)-SH + AH2 + 2 S-adenosyl-L-methionine = 2-methylsulfanyl-N(6)-dimethylallyladenosine(37) in tRNA + (sulfur carrier)-H + 5'-deoxyadenosine + L-methionine + A + S-adenosyl-L-homocysteine + 2 H(+). Its function is as follows. Catalyzes the methylthiolation of N6-(dimethylallyl)adenosine (i(6)A), leading to the formation of 2-methylthio-N6-(dimethylallyl)adenosine (ms(2)i(6)A) at position 37 in tRNAs that read codons beginning with uridine. The polypeptide is tRNA-2-methylthio-N(6)-dimethylallyladenosine synthase (Natranaerobius thermophilus (strain ATCC BAA-1301 / DSM 18059 / JW/NM-WN-LF)).